The primary structure comprises 130 residues: Iron-sulfur cluster insertion protein ErpA (130 aa).

The iron-sulfur cluster site is built by Cys46, Cys116, and Cys118.

Belongs to the HesB/IscA family. Homodimer. Iron-sulfur cluster serves as cofactor.

Functionally, required for insertion of 4Fe-4S clusters for at least IspG. The polypeptide is Iron-sulfur cluster insertion protein ErpA (Legionella pneumophila (strain Paris)).